Reading from the N-terminus, the 150-residue chain is Group IIC secretory phospholipase A2 (150 aa).

Residues 1–20 (MKGIAVFLVFIFCWTTSTLS) form the signal peptide. Intrachain disulfides connect Cys46–Cys143, Cys48–Cys64, Cys63–Cys121, Cys69–Cys150, Cys70–Cys114, Cys79–Cys107, Cys97–Cys112, and Cys99–Cys105. Ca(2+) is bound by residues Tyr47, Gly49, and Gly51. The active site involves His67. Asp68 is a Ca(2+) binding site. N-linked (GlcNAc...) asparagine glycosylation occurs at Asn92. The active site involves Asp115.

It belongs to the phospholipase A2 family. Ca(2+) is required as a cofactor.

The protein localises to the secreted. It catalyses the reaction a 1,2-diacyl-sn-glycero-3-phosphocholine + H2O = a 1-acyl-sn-glycero-3-phosphocholine + a fatty acid + H(+). Its function is as follows. PA2 catalyzes the calcium-dependent hydrolysis of the 2-acyl groups in 3-sn-phosphoglycerides. The sequence is that of Group IIC secretory phospholipase A2 (Pla2g2c) from Rattus norvegicus (Rat).